Consider the following 87-residue polypeptide: Mu-conotoxin cal12b (87 aa).

Positions 1–19 (MKLTCVLVVLLLLLPYGDL) are cleaved as a signal peptide. The propeptide occupies 20 to 42 (ITNNYIRGAARKVTPWRRNLKTR). 4 disulfides stabilise this stretch: Cys-45–Cys-58, Cys-53–Cys-70, Cys-60–Cys-75, and Cys-69–Cys-81. Trp-59 carries the post-translational modification 6'-bromotryptophan. At Pro-65 the chain carries 4-hydroxyproline. Trp-79 and Trp-80 each carry 6'-bromotryptophan. The residue at position 82 (Pro-82) is a 4-hydroxyproline. A 6'-bromotryptophan modification is found at Trp-86.

Expressed by the venom duct.

The protein localises to the secreted. Mu-conotoxins block voltage-gated sodium channels. This toxin reversibly blocks voltage-gated sodium channel in cephalopods (tested on squid giant-fiber-lobe neurons) with an inhibitor constant (Ki) of 15 nmol/l, with no alteration in the voltage dependence of sodium conductance or on the kinetics of inactivation. Has no effect on sodium channels of the two gastropod S.luhuanus and A.californica (which are not natural prey). The polypeptide is Mu-conotoxin cal12b (Californiconus californicus (California cone)).